The following is a 421-amino-acid chain: Zinc finger protein Pegasus (421 aa).

The tract at residues 35-55 (GDKEAETLQGAGTEGDQNGLD) is disordered. 3 consecutive C2H2-type zinc fingers follow at residues 82–104 (LKCR…IRIH), 110–132 (HRCH…MRSH), and 138–161 (YKCE…RRKH). The segment covering 229 to 238 (SMTKSSQTSG) has biased composition (polar residues). 2 disordered regions span residues 229-249 (SMTK…LMVD) and 292-358 (QPAT…PTLP). Low complexity predominate over residues 292-313 (QPATPAVVSSVSASIAQSSSPT). The segment covering 339–351 (HTSTPSISNSQPS) has biased composition (polar residues). C2H2-type zinc fingers lie at residues 366 to 388 (HHCQ…MGCH) and 394 to 418 (FQCN…RGQH).

This sequence belongs to the Ikaros C2H2-type zinc-finger protein family. Probably self-associates.

Its subcellular location is the nucleus. In terms of biological role, transcriptional repressor that binds the core 5'GNNTGTNG-3' DNA consensus sequence. In Gallus gallus (Chicken), this protein is Zinc finger protein Pegasus (IKZF5).